The sequence spans 130 residues: Small ribosomal subunit protein uS9 (130 aa).

It belongs to the universal ribosomal protein uS9 family.

The polypeptide is Small ribosomal subunit protein uS9 (Yersinia enterocolitica serotype O:8 / biotype 1B (strain NCTC 13174 / 8081)).